We begin with the raw amino-acid sequence, 419 residues long: Tol-Pal system protein TolB (419 aa).

A signal peptide spans 1–19; sequence MFNRIISLFLLLFTGQVIA.

It belongs to the TolB family. In terms of assembly, the Tol-Pal system is composed of five core proteins: the inner membrane proteins TolA, TolQ and TolR, the periplasmic protein TolB and the outer membrane protein Pal. They form a network linking the inner and outer membranes and the peptidoglycan layer.

The protein localises to the periplasm. Functionally, part of the Tol-Pal system, which plays a role in outer membrane invagination during cell division and is important for maintaining outer membrane integrity. The polypeptide is Tol-Pal system protein TolB (Legionella pneumophila (strain Corby)).